The following is a 338-amino-acid chain: Beta-ketoacyl-[acyl-carrier-protein] synthase III (338 aa).

Catalysis depends on residues C119 and H261. The interval 262-266 is ACP-binding; sequence QANQR. N291 is a catalytic residue.

It belongs to the thiolase-like superfamily. FabH family. In terms of assembly, homodimer.

It localises to the cytoplasm. It catalyses the reaction malonyl-[ACP] + acetyl-CoA + H(+) = 3-oxobutanoyl-[ACP] + CO2 + CoA. It functions in the pathway lipid metabolism; fatty acid biosynthesis. Functionally, catalyzes the condensation reaction of fatty acid synthesis by the addition to an acyl acceptor of two carbons from malonyl-ACP. Catalyzes the first condensation reaction which initiates fatty acid synthesis and may therefore play a role in governing the total rate of fatty acid production. Possesses both acetoacetyl-ACP synthase and acetyl transacylase activities. Its substrate specificity determines the biosynthesis of branched-chain and/or straight-chain of fatty acids. The chain is Beta-ketoacyl-[acyl-carrier-protein] synthase III from Prochlorococcus marinus (strain NATL2A).